The chain runs to 392 residues: Phosphoprotein (392 aa).

Disordered regions lie at residues 61–107 (ESTN…GLDS) and 152–182 (PIAT…DGWE). Positions 217-280 (LNVNEILNTV…ITTVKIMDPG (64 aa)) are multimerization. Positions 219 to 246 (VNEILNTVRNLDSRMNQLETKVDRILSS) form a coiled coil.

It belongs to the rubulavirus/avulavirus P protein family. Homotetramer. Interacts (via multimerization domain) with polymerase L; this interaction forms the polymerase L-P complex. Interacts (via N-terminus) with N0 (via Ncore); this interaction allows P to chaperon N0 to avoid N polymerization before encapsidation. Interacts (via C-terminus) with N-RNA template; this interaction positions the polymerase on the template for both transcription and replication.

In terms of biological role, essential cofactor of the RNA polymerase L that plays a central role in the transcription and replication by forming the polymerase complex with RNA polymerase L and recruiting L to the genomic N-RNA template for RNA synthesis. Also plays a central role in the encapsidation of nascent RNA chains by forming the encapsidation complex with the nucleocapsid protein N (N-P complex). Acts as a chaperone for newly synthesized free N protein, so-called N0, allowing encapsidation of nascent RNA chains during replication. The nucleoprotein protein N prevents excessive phosphorylation of P, which leads to down-regulation of viral transcription/ replication. Participates, together with N, in the formation of viral factories (viroplasms), which are large inclusions in the host cytoplasm where replication takes place. The polypeptide is Phosphoprotein (P/V) (Canis lupus familiaris (Dog)).